A 267-amino-acid polypeptide reads, in one-letter code: Undecaprenyl-diphosphatase 1 (267 aa).

Transmembrane regions (helical) follow at residues 6 to 26 (VLVV…AAGL), 41 to 60 (AALS…IYFW), 83 to 103 (HLLL…WLVL), 109 to 129 (LVGQ…LWGC), 142 to 162 (MSWV…VPGV), 185 to 205 (FSML…FWGL), 217 to 237 (LLMA…GMMA), and 244 to 264 (FVPF…LVYF).

Belongs to the UppP family.

The protein resides in the cell inner membrane. The enzyme catalyses di-trans,octa-cis-undecaprenyl diphosphate + H2O = di-trans,octa-cis-undecaprenyl phosphate + phosphate + H(+). Catalyzes the dephosphorylation of undecaprenyl diphosphate (UPP). Confers resistance to bacitracin. The chain is Undecaprenyl-diphosphatase 1 from Paramagnetospirillum magneticum (strain ATCC 700264 / AMB-1) (Magnetospirillum magneticum).